A 120-amino-acid chain; its full sequence is MEYHCQKGLNQGSRRSRRRLKYTLILSSGSPRDSMMQTNESSLLSKVGMTWLHQSVMLNLQSPDWKALSEPSKQLSMDLIRVLPSWVLEWDNLRQDLQSYALITTISLREWILQNVTLDH.

Belongs to the orthoreovirus sigma-1s protein family.

This Mammalia (T3D) protein is Protein sigma-1-small (S1).